The chain runs to 496 residues: MARLRSMVQAGVARVEGFGLAGFSDEELYAIHTSTLEVLEYTGLKIESQEALEIFSEGGARVDFKTKVVKIPQYLVEDAIQSAPSTLVLAGRNPKNDIVLGGKRVGFINFGEGVSIIDPYTKEYRKTTRRDVANITRFCDAMDQMDAVLRPVAPQDIHPSVAVVHNAEVIFNNTSKHVFIGVEGGRNFKKVLKMAAAVAGGEDKLRERPLFSCNICPTSPLQIVNHASEVIIEGARAGIPVNMLSMGMSGATSAITLAGTLVTHNCEVLGAIVLSQLTSKGAPVLYGSSTTIMDMKNMTAPVGSPELGMINAGVAKLAQYYNLPSWVAGGOVDSKIPDAQASHEFTLTGFLTALAGANLIYGAGMLELGITFDYAQMLMDNEMARMIKKAVGGISVTDETLAVDVIKSVGTAGNFISEDHTYAHMRTQSQSKLVDRSMRENWLAAGAKDFTQRAYEEAISILENYTPEPLPEKIAATLRSIVEETEDEYGVARSLI.

O331 is a non-standard amino acid (pyrrolysine).

It belongs to the trimethylamine methyltransferase family.

The catalysed reaction is Co(I)-[trimethylamine-specific corrinoid protein] + trimethylamine + H(+) = methyl-Co(III)-[trimethylamine-specific corrinoid protein] + dimethylamine. Its function is as follows. Catalyzes the transfer of a methyl group from trimethylamine to the corrinoid cofactor of MttC. This chain is Trimethylamine methyltransferase MttB, found in Desulfitobacterium hafniense (strain DSM 10664 / DCB-2).